The primary structure comprises 334 residues: tRNA-dihydrouridine(20/20a) synthase (334 aa).

FMN contacts are provided by residues 17 to 19 (PMM) and glutamine 70. Cysteine 100 functions as the Proton donor in the catalytic mechanism. FMN contacts are provided by residues lysine 139, histidine 171, 211–213 (NGG), and 233–234 (GR).

The protein belongs to the Dus family. DusA subfamily. Requires FMN as cofactor.

It catalyses the reaction 5,6-dihydrouridine(20) in tRNA + NADP(+) = uridine(20) in tRNA + NADPH + H(+). It carries out the reaction 5,6-dihydrouridine(20) in tRNA + NAD(+) = uridine(20) in tRNA + NADH + H(+). The catalysed reaction is 5,6-dihydrouridine(20a) in tRNA + NADP(+) = uridine(20a) in tRNA + NADPH + H(+). The enzyme catalyses 5,6-dihydrouridine(20a) in tRNA + NAD(+) = uridine(20a) in tRNA + NADH + H(+). Functionally, catalyzes the synthesis of 5,6-dihydrouridine (D), a modified base found in the D-loop of most tRNAs, via the reduction of the C5-C6 double bond in target uridines. Specifically modifies U20 and U20a in tRNAs. The chain is tRNA-dihydrouridine(20/20a) synthase (dus2) from Synechocystis sp. (strain ATCC 27184 / PCC 6803 / Kazusa).